A 208-amino-acid polypeptide reads, in one-letter code: ATP-dependent Clp protease proteolytic subunit (208 aa).

The active-site Nucleophile is serine 98. Residue histidine 123 is part of the active site.

The protein belongs to the peptidase S14 family. In terms of assembly, fourteen ClpP subunits assemble into 2 heptameric rings which stack back to back to give a disk-like structure with a central cavity, resembling the structure of eukaryotic proteasomes.

It is found in the cytoplasm. The enzyme catalyses Hydrolysis of proteins to small peptides in the presence of ATP and magnesium. alpha-casein is the usual test substrate. In the absence of ATP, only oligopeptides shorter than five residues are hydrolyzed (such as succinyl-Leu-Tyr-|-NHMec, and Leu-Tyr-Leu-|-Tyr-Trp, in which cleavage of the -Tyr-|-Leu- and -Tyr-|-Trp bonds also occurs).. Cleaves peptides in various proteins in a process that requires ATP hydrolysis. Has a chymotrypsin-like activity. Plays a major role in the degradation of misfolded proteins. This Wolbachia sp. subsp. Drosophila simulans (strain wRi) protein is ATP-dependent Clp protease proteolytic subunit.